Consider the following 474-residue polypeptide: Trigger factor (474 aa).

The 88-residue stretch at 171–258 folds into the PPIase FKBP-type domain; that stretch reads GDVAVIDFQG…LKELKTRDLP (88 aa). The tract at residues 441–474 is disordered; the sequence is TEVDAASATVETTATETAEEAPEAPKAKKGKKKA. Residues 444–456 are compositionally biased toward low complexity; that stretch reads DAASATVETTATE.

Belongs to the FKBP-type PPIase family. Tig subfamily.

It is found in the cytoplasm. It catalyses the reaction [protein]-peptidylproline (omega=180) = [protein]-peptidylproline (omega=0). In terms of biological role, involved in protein export. Acts as a chaperone by maintaining the newly synthesized protein in an open conformation. Functions as a peptidyl-prolyl cis-trans isomerase. This chain is Trigger factor, found in Synechococcus elongatus (strain ATCC 33912 / PCC 7942 / FACHB-805) (Anacystis nidulans R2).